A 128-amino-acid polypeptide reads, in one-letter code: Large ribosomal subunit protein uL22 (128 aa).

This sequence belongs to the universal ribosomal protein uL22 family. Part of the 50S ribosomal subunit.

In terms of biological role, this protein binds specifically to 23S rRNA; its binding is stimulated by other ribosomal proteins, e.g. L4, L17, and L20. It is important during the early stages of 50S assembly. It makes multiple contacts with different domains of the 23S rRNA in the assembled 50S subunit and ribosome. Functionally, the globular domain of the protein is located near the polypeptide exit tunnel on the outside of the subunit, while an extended beta-hairpin is found that lines the wall of the exit tunnel in the center of the 70S ribosome. This chain is Large ribosomal subunit protein uL22, found in Methylobacterium radiotolerans (strain ATCC 27329 / DSM 1819 / JCM 2831 / NBRC 15690 / NCIMB 10815 / 0-1).